The primary structure comprises 1201 residues: Vitamin B12-dependent ribonucleotide reductase (1201 aa).

Residues Ser-153, 198 to 199, Gly-230, 482 to 486, and 683 to 687 contribute to the substrate site; these read AC, NPCSE, and PTGTI. Cys-199 and Cys-495 are disulfide-bonded. The Proton acceptor role is filled by Asn-482. Cys-484 serves as the catalytic Cysteine radical intermediate. Glu-486 functions as the Proton acceptor in the catalytic mechanism. A compositionally biased stretch (basic and acidic residues) spans 1100-1118; the sequence is DEIGSKRATAESNGQEKET. Positions 1100-1120 are disordered; that stretch reads DEIGSKRATAESNGQEKETLS.

It belongs to the ribonucleoside diphosphate reductase class-2 family. Requires adenosylcob(III)alamin as cofactor.

It catalyses the reaction a 2'-deoxyribonucleoside 5'-diphosphate + [thioredoxin]-disulfide + H2O = a ribonucleoside 5'-diphosphate + [thioredoxin]-dithiol. Functionally, catalyzes the reduction of ribonucleotides to deoxyribonucleotides. May function to provide a pool of deoxyribonucleotide precursors for DNA repair during oxygen limitation and/or for immediate growth after restoration of oxygen. The chain is Vitamin B12-dependent ribonucleotide reductase (nrdJ) from Leptospira interrogans serogroup Icterohaemorrhagiae serovar Lai (strain 56601).